The chain runs to 441 residues: Probable glycine dehydrogenase (decarboxylating) subunit 1 (441 aa).

Belongs to the GcvP family. N-terminal subunit subfamily. In terms of assembly, the glycine cleavage system is composed of four proteins: P, T, L and H. In this organism, the P 'protein' is a heterodimer of two subunits.

The enzyme catalyses N(6)-[(R)-lipoyl]-L-lysyl-[glycine-cleavage complex H protein] + glycine + H(+) = N(6)-[(R)-S(8)-aminomethyldihydrolipoyl]-L-lysyl-[glycine-cleavage complex H protein] + CO2. The glycine cleavage system catalyzes the degradation of glycine. The P protein binds the alpha-amino group of glycine through its pyridoxal phosphate cofactor; CO(2) is released and the remaining methylamine moiety is then transferred to the lipoamide cofactor of the H protein. The chain is Probable glycine dehydrogenase (decarboxylating) subunit 1 from Halobacterium salinarum (strain ATCC 700922 / JCM 11081 / NRC-1) (Halobacterium halobium).